We begin with the raw amino-acid sequence, 709 residues long: Nucleobase-ascorbate transporter 12 (709 aa).

The disordered stretch occupies residues 1–145 (MSSSDPKPGP…GSGDPVRRPG (145 aa)). Over residues 7-19 (KPGPKPGPWPPTP) the composition is skewed to pro residues. Ser40 carries the post-translational modification Phosphoserine. Polar residues predominate over residues 41-53 (GETTATDSSSGQL). Composition is skewed to basic and acidic residues over residues 89 to 98 (ETDKDKKEKP) and 113 to 122 (QPVKRRRDSD). 12 helical membrane-spanning segments follow: residues 190-210 (YLSM…AMGG), 218-238 (VVST…SFGS), 240-260 (LPLI…IINS), 283-303 (IIIG…SLIL), 308-328 (PVVV…YGFP), 329-349 (LVGK…IFAL), 361-381 (IFLI…AFLL), 438-458 (WGVP…SVIA), 530-550 (GACV…LASI), 551-571 (PQVM…ALGL), 585-605 (IIIV…FQQY), and 639-659 (YVMN…AVIL).

The protein belongs to the nucleobase:cation symporter-2 (NCS2) (TC 2.A.40) family. As to expression, ubiquitous.

The protein localises to the cell membrane. In Arabidopsis thaliana (Mouse-ear cress), this protein is Nucleobase-ascorbate transporter 12 (NAT12).